A 138-amino-acid chain; its full sequence is Salivary protein 15 Iper-3 (138 aa).

Positions 1-21 are cleaved as a signal peptide; sequence MESFVAMKVVCITVLFVIVAV. N-linked (GlcNAc...) asparagine glycans are attached at residues asparagine 30, asparagine 42, asparagine 68, asparagine 107, and asparagine 127. The interval 119–138 is CD4-binding; that stretch reads GPNGQKCANKSQCVGHIPGC.

The protein belongs to the salp15 family. Interacts with host CD4. Interacts with host DC-SIGN (CD209). Interacts with Borrelia outer surface protein C (OspC). As to expression, expressed in salivary glands.

The protein resides in the secreted. Salivary tick protein that downregulates host immune system by binding to both dendritic cells, and CD4(+) T cells. Specifically binds to the CD4 coreceptor on T cells. This interaction prevents the activation of the Src kinase, Lck, and its downstream substrate Zap-70, and results in deficient activation of PLCgamma1, the repression of calcium fluxes triggered by T-cell antigen receptor (TCR) ligation, and a subsequent reduction in interleukin-2 production. This salivary protein also binds to DC-SIGN (CD209) on dendritic cells (DC) and activates the Raf-1 kinase/MEK signaling pathway that results in down-regulating expression of pro-inflammatory cytokines. Furthermore, it inhibits T cell proliferation induced by DCs. It also inhibits in vitro keratinocyte inflammation induced by Borrelia burgdorferi or by the major outer surface protein (OspC) of Borrelia. In addition, it downregulates chemokines and monocyte chemoattractant protein 1, as well as several antimicrobial peptides such as defensins, cathelicidin, psoriasin, and RNase 7. Apart from its immunomodulatory activities, it is also associated with protection of Borrelia spirochetes from antibody-mediated killing through its binding to OspC. In vivo, tests on different immune disease animal models show promising therapeutic results, e.g., in inhibiting HIV infection, experimental autoimmune encephalomyelitis, transplantation rejection, and asthma. This Ixodes persulcatus (Taiga tick) protein is Salivary protein 15 Iper-3.